The chain runs to 286 residues: Tyrosine recombinase XerA (286 aa).

Residues 5–82 (TLRSEVLEEF…ALKAYFKFEG (78 aa)) form the Core-binding (CB) domain. Residues 98-274 (TLPKSLTEEE…TAKHLKEAVE (177 aa)) form the Tyr recombinase domain. Active-site residues include R135, K160, H226, R229, and H252. Y261 acts as the O-(3'-phospho-DNA)-tyrosine intermediate in catalysis.

This sequence belongs to the 'phage' integrase family. XerA subfamily.

The protein localises to the cytoplasm. Its function is as follows. Site-specific tyrosine recombinase, which acts by catalyzing the cutting and rejoining of the recombining DNA molecules. This is Tyrosine recombinase XerA from Pyrococcus furiosus (strain ATCC 43587 / DSM 3638 / JCM 8422 / Vc1).